The primary structure comprises 115 residues: Holo-[acyl-carrier-protein] synthase (115 aa).

Residues aspartate 5 and glutamate 51 each contribute to the Mg(2+) site.

It belongs to the P-Pant transferase superfamily. AcpS family. The cofactor is Mg(2+).

It localises to the cytoplasm. The enzyme catalyses apo-[ACP] + CoA = holo-[ACP] + adenosine 3',5'-bisphosphate + H(+). Functionally, transfers the 4'-phosphopantetheine moiety from coenzyme A to a Ser of acyl-carrier-protein. The sequence is that of Holo-[acyl-carrier-protein] synthase from Helicobacter acinonychis (strain Sheeba).